Reading from the N-terminus, the 798-residue chain is Exo-1,4-beta-xylosidase xlnD (798 aa).

An N-terminal signal peptide occupies residues 1 to 20 (MPGAASIVAVLAALLPTALG). N-linked (GlcNAc...) asparagine glycosylation is found at N23, N87, N142, and N237. D310 is an active-site residue. N-linked (GlcNAc...) asparagine glycosylation is found at N326, N391, N404, N443, N480, N522, N618, N645, N658, N685, and N707.

The protein belongs to the glycosyl hydrolase 3 family.

The protein localises to the secreted. The catalysed reaction is Hydrolysis of (1-&gt;4)-beta-D-xylans, to remove successive D-xylose residues from the non-reducing termini.. It functions in the pathway glycan degradation; xylan degradation. Its function is as follows. Xylan 1,4-beta-xylosidase involved in the hydrolysis of xylan, a major structural heterogeneous polysaccharide found in plant biomass representing the second most abundant polysaccharide in the biosphere, after cellulose. The protein is Exo-1,4-beta-xylosidase xlnD (xlnD) of Aspergillus oryzae (strain ATCC 42149 / RIB 40) (Yellow koji mold).